A 161-amino-acid polypeptide reads, in one-letter code: MARGGARGCPCPSETSASGATAEVKRSAGRPCSRYRPPQTLLLNNRLRPFRCRYRSSATMLEHLSSLPTQMDYKGQKLAEQMFQGIILFSAIVGFIYGYVAEQFGWTVYIVMAGFAFSCLLTLPPWPIYRRHPLKWLPVQDLGTEDKKSGDRKIKRHAKNN.

Residues 1-22 (MARGGARGCPCPSETSASGATA) form a disordered region. Topologically, residues 1–85 (MARGGARGCP…QKLAEQMFQG (85 aa)) are cytoplasmic. The chain crosses the membrane as a helical span at residues 86 to 106 (IILFSAIVGFIYGYVAEQFGW). Thr107 is a topological domain (lumenal). Residues 108–128 (VYIVMAGFAFSCLLTLPPWPI) traverse the membrane as a helical segment. At 129-161 (YRRHPLKWLPVQDLGTEDKKSGDRKIKRHAKNN) the chain is on the cytoplasmic side.

The protein belongs to the SPCS1 family. In terms of assembly, component of the signal peptidase complex paralog A (SPC-A) composed of a catalytic subunit SEC11A and three accessory subunits SPCS1, SPCS2 and SPCS3. Component of the signal peptidase complex paralog C (SPC-C) composed of a catalytic subunit SEC11C and three accessory subunits SPCS1, SPCS2 and SPCS3. Within the complex, interacts with SPCS2 and SPCS3. The complex induces a local thinning of the ER membrane which is used to measure the length of the signal peptide (SP) h-region of protein substrates. This ensures the selectivity of the complex towards h-regions shorter than 18-20 amino acids. May be phosphorylated.

It localises to the endoplasmic reticulum membrane. In terms of biological role, component of the signal peptidase complex (SPC) which catalyzes the cleavage of N-terminal signal sequences from nascent proteins as they are translocated into the lumen of the endoplasmic reticulum. Dispensable for SPC enzymatic activity. The sequence is that of Signal peptidase complex subunit 1 (Spcs1) from Mus musculus (Mouse).